The chain runs to 389 residues: MLLWLAQHFQDEIGPLRVFNFITFRAVFATLTALAIGLFFGPMVIRMLQRLKVGQAVRTDGPQTHLIKSGTPTMGGALILLAIGVATLLWTDLSNRFVWVVLIVTLGFGAVGWVDDYRKVVYKDPKGMASREKYMWQSIIGLFAAVYLAFSVSAPSNSQFLDLFVAWVQSGFSMDLPPKADLIVPFFKTISYPLGVWGFIALTYFVIVGTSNAVNLTDGLDGLAIMPTVMVGTALGLFAYLTGSATYAKYLFIPHIPGAGELIIFCGAMAGAGLAFLWFNAHPAQVFMGDVGALALGGALGTIAVIVRQEIVLFIMGGVFVVETLSVMIQVAYFKYTKMRTGTGRRILLMAPLHHHFEQKGWKETQVVVRFWIITMMLVLFGLSTLKLR.

Helical transmembrane passes span 21–41, 70–90, 97–117, 134–154, 189–209, 222–242, 259–279, 286–306, 311–331, and 366–386; these read FITF…LFFG, GTPT…TLLW, FVWV…VDDY, YMWQ…SVSA, TISY…VIVG, GLAI…AYLT, AGEL…FLWF, VFMG…IAVI, IVLF…MIQV, and QVVV…LSTL.

This sequence belongs to the glycosyltransferase 4 family. MraY subfamily. It depends on Mg(2+) as a cofactor.

The protein resides in the cell inner membrane. The enzyme catalyses UDP-N-acetyl-alpha-D-muramoyl-L-alanyl-gamma-D-glutamyl-meso-2,6-diaminopimeloyl-D-alanyl-D-alanine + di-trans,octa-cis-undecaprenyl phosphate = di-trans,octa-cis-undecaprenyl diphospho-N-acetyl-alpha-D-muramoyl-L-alanyl-D-glutamyl-meso-2,6-diaminopimeloyl-D-alanyl-D-alanine + UMP. It functions in the pathway cell wall biogenesis; peptidoglycan biosynthesis. In terms of biological role, catalyzes the initial step of the lipid cycle reactions in the biosynthesis of the cell wall peptidoglycan: transfers peptidoglycan precursor phospho-MurNAc-pentapeptide from UDP-MurNAc-pentapeptide onto the lipid carrier undecaprenyl phosphate, yielding undecaprenyl-pyrophosphoryl-MurNAc-pentapeptide, known as lipid I. The polypeptide is Phospho-N-acetylmuramoyl-pentapeptide-transferase (Herminiimonas arsenicoxydans).